Consider the following 505-residue polypeptide: Trans-cinnamate 4-monooxygenase (505 aa).

Residues 3-23 traverse the membrane as a helical segment; the sequence is LLLLEKTLLALFIAATIAITI. Residues 212–217 and A305 contribute to the (E)-cinnamate site; that span reads RSRLAQ. C446 is a binding site for heme.

It belongs to the cytochrome P450 family. Heme is required as a cofactor.

Its subcellular location is the membrane. The enzyme catalyses (E)-cinnamate + reduced [NADPH--hemoprotein reductase] + O2 = (E)-4-coumarate + oxidized [NADPH--hemoprotein reductase] + H2O + H(+). Its pathway is phenylpropanoid metabolism; trans-4-coumarate biosynthesis; trans-4-coumarate from trans-cinnamate: step 1/1. Catalyzes the first oxidative step of the phenylpropanoid pathway in higher plants by transforming trans-cinnamate into p-coumarate. The compounds formed by this pathway are essential components for lignification, pollination, and defense against ultraviolet light, predators and pathogens. The sequence is that of Trans-cinnamate 4-monooxygenase (CYP73A19) from Cicer arietinum (Chickpea).